Here is a 572-residue protein sequence, read N- to C-terminus: Formate--tetrahydrofolate ligase (572 aa).

Position 81 to 88 (81 to 88) interacts with ATP; that stretch reads TPAGEGKT.

Belongs to the formate--tetrahydrofolate ligase family.

It carries out the reaction (6S)-5,6,7,8-tetrahydrofolate + formate + ATP = (6R)-10-formyltetrahydrofolate + ADP + phosphate. The protein operates within one-carbon metabolism; tetrahydrofolate interconversion. The polypeptide is Formate--tetrahydrofolate ligase (Granulibacter bethesdensis (strain ATCC BAA-1260 / CGDNIH1)).